A 263-amino-acid polypeptide reads, in one-letter code: UPF0739 protein C1orf74 homolog (263 aa).

The protein belongs to the UPF0739 family.

This Xenopus tropicalis (Western clawed frog) protein is UPF0739 protein C1orf74 homolog.